The following is a 463-amino-acid chain: Asparagine--tRNA ligase (463 aa).

Belongs to the class-II aminoacyl-tRNA synthetase family. In terms of assembly, homodimer.

The protein resides in the cytoplasm. It carries out the reaction tRNA(Asn) + L-asparagine + ATP = L-asparaginyl-tRNA(Asn) + AMP + diphosphate + H(+). This Nostoc sp. (strain PCC 7120 / SAG 25.82 / UTEX 2576) protein is Asparagine--tRNA ligase.